Reading from the N-terminus, the 423-residue chain is GPI mannosyltransferase 2 (423 aa).

9 helical membrane-spanning segments follow: residues 11-31 (ILSL…IALG), 106-126 (WEAL…VLAL), 139-159 (LAYL…ISAP), 160-180 (YAES…AISL), 197-219 (GLSY…LFAV), 240-260 (LVAP…PQVL), 299-319 (YWTP…TILL), 351-371 (LAAI…VQII), and 400-420 (GVIV…ASFL).

This sequence belongs to the PIGV family.

It is found in the endoplasmic reticulum membrane. It functions in the pathway glycolipid biosynthesis; glycosylphosphatidylinositol-anchor biosynthesis. Its function is as follows. Mannosyltransferase involved in glycosylphosphatidylinositol-anchor biosynthesis. Transfers the second mannose to the glycosylphosphatidylinositol during GPI precursor assembly. The sequence is that of GPI mannosyltransferase 2 (GPI18) from Gibberella zeae (strain ATCC MYA-4620 / CBS 123657 / FGSC 9075 / NRRL 31084 / PH-1) (Wheat head blight fungus).